The primary structure comprises 107 residues: Large ribosomal subunit protein uL24 (107 aa).

It belongs to the universal ribosomal protein uL24 family. As to quaternary structure, part of the 50S ribosomal subunit.

Its function is as follows. One of two assembly initiator proteins, it binds directly to the 5'-end of the 23S rRNA, where it nucleates assembly of the 50S subunit. In terms of biological role, one of the proteins that surrounds the polypeptide exit tunnel on the outside of the subunit. This Pelotomaculum thermopropionicum (strain DSM 13744 / JCM 10971 / SI) protein is Large ribosomal subunit protein uL24.